A 149-amino-acid chain; its full sequence is Transcriptional repressor NrdR (149 aa).

A zinc finger lies at 3–34 (CPFCSAVDTKVIDSRLVAEGHQVRRRRECLLC). The ATP-cone domain maps to 49–139 (PRVIKSNGSR…VYRSFEDIRE (91 aa)).

Belongs to the NrdR family. It depends on Zn(2+) as a cofactor.

In terms of biological role, negatively regulates transcription of bacterial ribonucleotide reductase nrd genes and operons by binding to NrdR-boxes. The chain is Transcriptional repressor NrdR from Aeromonas salmonicida (strain A449).